The primary structure comprises 311 residues: Aspartate carbamoyltransferase catalytic subunit (311 aa).

Carbamoyl phosphate contacts are provided by arginine 55 and threonine 56. L-aspartate is bound at residue lysine 85. Carbamoyl phosphate-binding residues include arginine 106, histidine 134, and glutamine 137. L-aspartate is bound by residues arginine 167 and arginine 228. Carbamoyl phosphate contacts are provided by leucine 266 and proline 267.

The protein belongs to the aspartate/ornithine carbamoyltransferase superfamily. ATCase family. Heterododecamer (2C3:3R2) of six catalytic PyrB chains organized as two trimers (C3), and six regulatory PyrI chains organized as three dimers (R2).

The catalysed reaction is carbamoyl phosphate + L-aspartate = N-carbamoyl-L-aspartate + phosphate + H(+). It participates in pyrimidine metabolism; UMP biosynthesis via de novo pathway; (S)-dihydroorotate from bicarbonate: step 2/3. Functionally, catalyzes the condensation of carbamoyl phosphate and aspartate to form carbamoyl aspartate and inorganic phosphate, the committed step in the de novo pyrimidine nucleotide biosynthesis pathway. The polypeptide is Aspartate carbamoyltransferase catalytic subunit (Psychromonas ingrahamii (strain DSM 17664 / CCUG 51855 / 37)).